Here is a 1215-residue protein sequence, read N- to C-terminus: Inner capsid protein VP3 (1215 aa).

Residues 1-81 (MPRRPRRNAK…RVDNDGDVIT (81 aa)) form a disordered region. Residues 21–44 (LVAPAANASVSSTVNTTTSPTLAA) are compositionally biased toward low complexity. A C2H2-type zinc finger spans residues 118-141 (YRCNVCNAEFPSMSAMTEHLRTSH).

This sequence belongs to the turreted BTV-fold inner capsid family. Homodecamer; each decamer is made up of two conformers of VP2, called VP2A and VP2B. 12 homodecamers assemble to form an icosahedral capsid. Interacts with VP6.

It is found in the virion. Functionally, inner capsid protein that self-assembles to form an icosahedral capsid with a T=2 symmetry, which consists of 120 copies of VP2, with channels at each of its five-fold vertices. This capsid constitutes the innermost concentric layer of the viral mature particle. The protein is Inner capsid protein VP3 (S3) of Ctenopharyngodon idella (Grass carp).